A 416-amino-acid chain; its full sequence is Homogentisate 1,2-dioxygenase (416 aa).

His-275 acts as the Proton acceptor in catalysis. Fe cation contacts are provided by His-318 and Glu-324. Tyr-333 and His-354 together coordinate homogentisate. Residue His-354 participates in Fe cation binding.

It belongs to the homogentisate dioxygenase family. As to quaternary structure, hexamer; dimer of trimers. Requires Fe cation as cofactor.

The catalysed reaction is homogentisate + O2 = 4-maleylacetoacetate + H(+). The protein operates within amino-acid degradation; L-phenylalanine degradation; acetoacetate and fumarate from L-phenylalanine: step 4/6. Functionally, involved in the catabolism of homogentisate (2,5-dihydroxyphenylacetate or 2,5-OH-PhAc), a central intermediate in the degradation of phenylalanine and tyrosine. Catalyzes the oxidative ring cleavage of the aromatic ring of homogentisate to yield maleylacetoacetate. The polypeptide is Homogentisate 1,2-dioxygenase (Legionella pneumophila subsp. pneumophila (strain Philadelphia 1 / ATCC 33152 / DSM 7513)).